The sequence spans 403 residues: Argininosuccinate synthase (403 aa).

10–18 contributes to the ATP binding site; sequence AYSGGLDTS. Tyr87 lines the L-citrulline pocket. ATP is bound at residue Gly117. Residues Thr119, Asn123, and Asp124 each contribute to the L-aspartate site. Asn123 contributes to the L-citrulline binding site. The L-citrulline site is built by Arg127, Ser175, Ser184, Glu260, and Tyr272.

This sequence belongs to the argininosuccinate synthase family. Type 1 subfamily. In terms of assembly, homotetramer.

It is found in the cytoplasm. It carries out the reaction L-citrulline + L-aspartate + ATP = 2-(N(omega)-L-arginino)succinate + AMP + diphosphate + H(+). The protein operates within amino-acid biosynthesis; L-arginine biosynthesis; L-arginine from L-ornithine and carbamoyl phosphate: step 2/3. This Bacillus pumilus (strain SAFR-032) protein is Argininosuccinate synthase.